The chain runs to 149 residues: Oligosaccharyltransferase complex subunit OSTC (149 aa).

The Cytoplasmic segment spans residues 1–32 (METLYRVPFLVLECPNLKLKKPPWLHMPSAMT). A helical membrane pass occupies residues 33–53 (VYALVVVSYFLITGGIIYDVI). At 54 to 83 (VEPPSVGSMTDEHGHQRPVAFLAYRVNGQY) the chain is on the extracellular side. The helical transmembrane segment at 84–104 (IMEGLASSFLFTMGGLGFIIL) threads the bilayer. Residues 105–117 (DRSNAPNIPKLNR) lie on the Cytoplasmic side of the membrane. The helical transmembrane segment at 118-138 (FLLLFIGFVCVLLSFFMARVF) threads the bilayer. Residues 139 to 149 (MRMKLPGYLMG) lie on the Extracellular side of the membrane.

It belongs to the OSTC family. As to quaternary structure, component of STT3A-containing oligosaccharyl transferase (OST-A) complex. STT3A-containing complex assembly occurs through the formation of 3 subcomplexes. Subcomplex 1 contains RPN1 and TMEM258, subcomplex 2 contains the STT3A-specific subunits STT3A, DC2/OSTC, and KCP2 as well as the core subunit OST4, and subcomplex 3 contains RPN2, DAD1, and OST48. The OST-A complex can form stable complexes with the Sec61 complex or with both the Sec61 and TRAP complexes. Interacts with PSEN1 and NCSTN; indicative for an association with the gamma-secretase complex.

It localises to the endoplasmic reticulum. It is found in the membrane. It functions in the pathway protein modification; protein glycosylation. Subunit of STT3A-containing oligosaccharyl transferase (OST-A) complex that catalyzes the initial transfer of a defined glycan (Glc(3)Man(9)GlcNAc(2) in eukaryotes) from the lipid carrier dolichol-pyrophosphate to an asparagine residue within an Asn-X-Ser/Thr consensus motif in nascent polypeptide chains, the first step in protein N-glycosylation. N-glycosylation occurs cotranslationally and the complex associates with the Sec61 complex at the channel-forming translocon complex that mediates protein translocation across the endoplasmic reticulum (ER). Within the OST-A complex, acts as an adapter that anchors the OST-A complex to the Sec61 complex. May be involved in N-glycosylation of APP (amyloid-beta precursor protein). Can modulate gamma-secretase cleavage of APP by enhancing endoprotelysis of PSEN1. In Homo sapiens (Human), this protein is Oligosaccharyltransferase complex subunit OSTC.